We begin with the raw amino-acid sequence, 91 residues long: Cell division topological specificity factor (91 aa).

Belongs to the MinE family.

Prevents the cell division inhibition by proteins MinC and MinD at internal division sites while permitting inhibition at polar sites. This ensures cell division at the proper site by restricting the formation of a division septum at the midpoint of the long axis of the cell. The chain is Cell division topological specificity factor from Thermoanaerobacter pseudethanolicus (strain ATCC 33223 / 39E) (Clostridium thermohydrosulfuricum).